The primary structure comprises 258 residues: Synapse differentiation-inducing gene protein 1 (258 aa).

Over 1–181 (MDGIIEQKSM…NFLMMPPRDH (181 aa)) the chain is Cytoplasmic. The residue at position 137 (serine 137) is a Phosphoserine. Residues 182-202 (LGLSVFSMLCCFWPLGIAAFY) traverse the membrane as a helical segment. Residues 203–228 (LSHETNKAVAKGDLHQASTSSRRALF) are Extracellular-facing. The helical intramembrane region spans 229–249 (LAVLSITIGTGVYVGVAVALI). Topologically, residues 250–258 (AYLSKNNHL) are extracellular.

The protein belongs to the CD225/Dispanin family. In terms of assembly, homodimer. Interacts with GRIA1 and GRIA2.

It is found in the cell membrane. It localises to the early endosome membrane. Its subcellular location is the postsynaptic density membrane. The protein localises to the synapse. The protein resides in the cell projection. It is found in the dendrite. It localises to the dendritic spine. In terms of biological role, may regulate AMPA receptor content at nascent synapses, and have a role in postsynaptic development and maturation. The chain is Synapse differentiation-inducing gene protein 1 (SYNDIG1) from Macaca fascicularis (Crab-eating macaque).